The following is a 182-amino-acid chain: Peptidyl-tRNA hydrolase (182 aa).

Tyr14 is a binding site for tRNA. Catalysis depends on His19, which acts as the Proton acceptor. TRNA-binding residues include Phe64, Asn66, and Asn112.

Belongs to the PTH family. In terms of assembly, monomer.

Its subcellular location is the cytoplasm. It carries out the reaction an N-acyl-L-alpha-aminoacyl-tRNA + H2O = an N-acyl-L-amino acid + a tRNA + H(+). In terms of biological role, hydrolyzes ribosome-free peptidyl-tRNAs (with 1 or more amino acids incorporated), which drop off the ribosome during protein synthesis, or as a result of ribosome stalling. Its function is as follows. Catalyzes the release of premature peptidyl moieties from peptidyl-tRNA molecules trapped in stalled 50S ribosomal subunits, and thus maintains levels of free tRNAs and 50S ribosomes. This Wolbachia sp. subsp. Drosophila simulans (strain wRi) protein is Peptidyl-tRNA hydrolase.